The sequence spans 457 residues: Bifunctional protein GlmU (457 aa).

Residues 1 to 230 (MSKRYAVVLA…FEESLGVNDR (230 aa)) form a pyrophosphorylase region. Residues 9–12 (LAAG), lysine 23, glutamine 73, and 78–79 (GT) each bind UDP-N-acetyl-alpha-D-glucosamine. Aspartate 103 is a Mg(2+) binding site. 4 residues coordinate UDP-N-acetyl-alpha-D-glucosamine: glycine 140, glutamate 155, asparagine 170, and asparagine 228. Mg(2+) is bound at residue asparagine 228. The interval 231–251 (IALAEASKLMQRRINENHMRN) is linker. Residues 252-457 (GVTLVNPENT…GYAKHLNHGK (206 aa)) form an N-acetyltransferase region. Arginine 333 and lysine 351 together coordinate UDP-N-acetyl-alpha-D-glucosamine. Residue histidine 363 is the Proton acceptor of the active site. 2 residues coordinate UDP-N-acetyl-alpha-D-glucosamine: tyrosine 366 and asparagine 377. Acetyl-CoA contacts are provided by residues 386–387 (NY), alanine 423, and arginine 440.

In the N-terminal section; belongs to the N-acetylglucosamine-1-phosphate uridyltransferase family. The protein in the C-terminal section; belongs to the transferase hexapeptide repeat family. As to quaternary structure, homotrimer. Mg(2+) serves as cofactor.

It localises to the cytoplasm. The catalysed reaction is alpha-D-glucosamine 1-phosphate + acetyl-CoA = N-acetyl-alpha-D-glucosamine 1-phosphate + CoA + H(+). It carries out the reaction N-acetyl-alpha-D-glucosamine 1-phosphate + UTP + H(+) = UDP-N-acetyl-alpha-D-glucosamine + diphosphate. It functions in the pathway nucleotide-sugar biosynthesis; UDP-N-acetyl-alpha-D-glucosamine biosynthesis; N-acetyl-alpha-D-glucosamine 1-phosphate from alpha-D-glucosamine 6-phosphate (route II): step 2/2. Its pathway is nucleotide-sugar biosynthesis; UDP-N-acetyl-alpha-D-glucosamine biosynthesis; UDP-N-acetyl-alpha-D-glucosamine from N-acetyl-alpha-D-glucosamine 1-phosphate: step 1/1. The protein operates within bacterial outer membrane biogenesis; LPS lipid A biosynthesis. Catalyzes the last two sequential reactions in the de novo biosynthetic pathway for UDP-N-acetylglucosamine (UDP-GlcNAc). The C-terminal domain catalyzes the transfer of acetyl group from acetyl coenzyme A to glucosamine-1-phosphate (GlcN-1-P) to produce N-acetylglucosamine-1-phosphate (GlcNAc-1-P), which is converted into UDP-GlcNAc by the transfer of uridine 5-monophosphate (from uridine 5-triphosphate), a reaction catalyzed by the N-terminal domain. The polypeptide is Bifunctional protein GlmU (Listeria innocua serovar 6a (strain ATCC BAA-680 / CLIP 11262)).